Here is a 353-residue protein sequence, read N- to C-terminus: Peptide methionine sulfoxide reductase MsrA/MsrB (353 aa).

The peptide methionine sulfoxide reductase A stretch occupies residues 43-196 (REIYLAGGCF…PNGYCHIDIT (154 aa)). Cys-51 is a catalytic residue. The MsrB domain maps to 213–336 (DAELKAKLTP…NSASIKFIPL (124 aa)). Cys-325 serves as the catalytic Nucleophile.

It in the N-terminal section; belongs to the MsrA Met sulfoxide reductase family. In the C-terminal section; belongs to the MsrB Met sulfoxide reductase family.

The catalysed reaction is L-methionyl-[protein] + [thioredoxin]-disulfide + H2O = L-methionyl-(S)-S-oxide-[protein] + [thioredoxin]-dithiol. The enzyme catalyses [thioredoxin]-disulfide + L-methionine + H2O = L-methionine (S)-S-oxide + [thioredoxin]-dithiol. It carries out the reaction L-methionyl-[protein] + [thioredoxin]-disulfide + H2O = L-methionyl-(R)-S-oxide-[protein] + [thioredoxin]-dithiol. Its function is as follows. Has an important function as a repair enzyme for proteins that have been inactivated by oxidation. Catalyzes the reversible oxidation-reduction of methionine sulfoxide in proteins to methionine. This chain is Peptide methionine sulfoxide reductase MsrA/MsrB (msrAB), found in Haemophilus influenzae (strain ATCC 51907 / DSM 11121 / KW20 / Rd).